The primary structure comprises 495 residues: Cytochrome P450 Tp4149 (495 aa).

2 consecutive transmembrane segments (helical) span residues 4 to 24 and 208 to 228; these read ILSLETLLISWLSSFILMFFI and YLSMFNLFSVGSYIPWLSWVD. An N-linked (GlcNAc...) asparagine glycan is attached at Asn419. Residue Cys437 coordinates heme.

It belongs to the cytochrome P450 family. It depends on heme as a cofactor.

It is found in the membrane. It participates in secondary metabolite biosynthesis; terpenoid biosynthesis. In terms of biological role, probably involved in the biosynthesis of germacrene-derived sesquiterpene lactones. This is Cytochrome P450 Tp4149 from Tanacetum parthenium (Feverfew).